Here is a 347-residue protein sequence, read N- to C-terminus: NADH-ubiquinone oxidoreductase chain 2 (347 aa).

Helical transmembrane passes span 3–23, 25–45, 60–80, 96–116, 149–169, 178–198, 200–220, 237–257, 274–294, and 323–343; these read PPILLIILLTMISGTMIVLTS, HWLTIWIGLEMNMLAIIPILM, LLTQATASMILMMGITINLMF, AMVTTALAMKLGLAPFHFWVP, IDPNLLLPMAITSILIGGWGG, ILAYSSIAHMGWMTAVTLYNP, MMLLNLTIYIIMTTTTFMLFM, APLITPLILMLMLSLGGLPPL, EMIIIPTIMAITALLNLYFYM, and MILLSPLTVVSTMLLPITPLL.

The protein belongs to the complex I subunit 2 family. As to quaternary structure, core subunit of respiratory chain NADH dehydrogenase (Complex I) which is composed of 45 different subunits. Interacts with TMEM242.

It is found in the mitochondrion inner membrane. It catalyses the reaction a ubiquinone + NADH + 5 H(+)(in) = a ubiquinol + NAD(+) + 4 H(+)(out). In terms of biological role, core subunit of the mitochondrial membrane respiratory chain NADH dehydrogenase (Complex I) which catalyzes electron transfer from NADH through the respiratory chain, using ubiquinone as an electron acceptor. Essential for the catalytic activity and assembly of complex I. The polypeptide is NADH-ubiquinone oxidoreductase chain 2 (Mungos mungo (Banded mongoose)).